The chain runs to 497 residues: MORN repeat-containing protein 1 (497 aa).

Residues 1–27 (MAAAGEGTPSSRGPRRDPPRRPPRNGY) are disordered. MORN repeat units lie at residues 39–61 (YEGE…DGSY), 62–84 (YEGA…WSGD), 86–108 (FSGQ…AGGC), 109–131 (YEGE…DGQV), 132–154 (YQGS…NGDK), 155–177 (YDGD…DGST), and 178–200 (YKGQ…SGVT). Disordered stretches follow at residues 393 to 425 (GGRS…ATEE) and 468 to 497 (QPPH…PAPR).

This is MORN repeat-containing protein 1 (MORN1) from Homo sapiens (Human).